The sequence spans 281 residues: 2-dehydro-3-deoxyphosphooctonate aldolase (281 aa).

The protein belongs to the KdsA family.

It is found in the cytoplasm. The catalysed reaction is D-arabinose 5-phosphate + phosphoenolpyruvate + H2O = 3-deoxy-alpha-D-manno-2-octulosonate-8-phosphate + phosphate. It participates in carbohydrate biosynthesis; 3-deoxy-D-manno-octulosonate biosynthesis; 3-deoxy-D-manno-octulosonate from D-ribulose 5-phosphate: step 2/3. The protein operates within bacterial outer membrane biogenesis; lipopolysaccharide biosynthesis. This is 2-dehydro-3-deoxyphosphooctonate aldolase from Marinobacter nauticus (strain ATCC 700491 / DSM 11845 / VT8) (Marinobacter aquaeolei).